A 133-amino-acid chain; its full sequence is MKTFPVSIVTPDGPVYEKEVEMVSVKAESGEMGILPGHIPTVAPLKISAVRLKNGGHTDYVAVSGGFIEVRPDKVTVLSSSAEEANHIDIHRANEAKRRAEQRLQDKQAHVDFKRAEMALQRAVNRLNVSDMK.

Belongs to the ATPase epsilon chain family. As to quaternary structure, F-type ATPases have 2 components, CF(1) - the catalytic core - and CF(0) - the membrane proton channel. CF(1) has five subunits: alpha(3), beta(3), gamma(1), delta(1), epsilon(1). CF(0) has three main subunits: a, b and c.

It localises to the cell membrane. Its function is as follows. Produces ATP from ADP in the presence of a proton gradient across the membrane. The chain is ATP synthase epsilon chain from Bacillus cereus (strain ATCC 14579 / DSM 31 / CCUG 7414 / JCM 2152 / NBRC 15305 / NCIMB 9373 / NCTC 2599 / NRRL B-3711).